A 421-amino-acid polypeptide reads, in one-letter code: MHDAVTRPTPPSDATAWPRRQTHAVQIGGVTVGGGKPVVVQSMTNTDTSDVASSVKQVAELWRAGSEMVRLTVNTVEAAAAIPRIVDKLAMMGIDVPLIGDFHYNGHQLLTAEPACAEALAKYRINPGNVGFGKKKDLQFAQLIEFAIRYNKPVRIGANWGSLDQALAAKLMDENNLREQPWDAGRVLREALIRSALDSAEQAVELGLPRDRIVLSAKVSGVQELIAVYRDLAQRSDFALHLGLTEAGIGSKGIVASSAALGVLLQEGIGDTIRISLTPEPGQSRTQEVIVAQELLQTTGQRAFTPLVTACPGCGRTTSEFFQELAKVVQNHVREKMPLWKIHHPGAENMTLAVMGCIVNGPGESRHANIGISLPGTGETPAAPVFVDGEKKVTLRGDNIAQEFVALIDDYVEHTYVRSAG.

[4Fe-4S] cluster contacts are provided by Cys311, Cys314, Cys357, and Glu364.

It belongs to the IspG family. [4Fe-4S] cluster is required as a cofactor.

It carries out the reaction (2E)-4-hydroxy-3-methylbut-2-enyl diphosphate + oxidized [flavodoxin] + H2O + 2 H(+) = 2-C-methyl-D-erythritol 2,4-cyclic diphosphate + reduced [flavodoxin]. It functions in the pathway isoprenoid biosynthesis; isopentenyl diphosphate biosynthesis via DXP pathway; isopentenyl diphosphate from 1-deoxy-D-xylulose 5-phosphate: step 5/6. Functionally, converts 2C-methyl-D-erythritol 2,4-cyclodiphosphate (ME-2,4cPP) into 1-hydroxy-2-methyl-2-(E)-butenyl 4-diphosphate. This Stenotrophomonas maltophilia (strain K279a) protein is 4-hydroxy-3-methylbut-2-en-1-yl diphosphate synthase (flavodoxin).